We begin with the raw amino-acid sequence, 325 residues long: uncharacterized protein (325 aa).

Residues 1 to 69 (MAMMTTTTTT…KNRRVSVTVS (69 aa)) constitute a chloroplast transit peptide. The residue at position 70 (A70) is an N-acetylalanine.

The protein belongs to the NAD(P)-dependent epimerase/dehydratase family.

The protein localises to the plastid. It is found in the chloroplast. This is an uncharacterized protein from Arabidopsis thaliana (Mouse-ear cress).